A 1186-amino-acid chain; its full sequence is Trafficking protein particle complex II-specific subunit 120 homolog (1186 aa).

Disordered regions lie at residues 777–824 (PTDS…EKES) and 964–984 (TKDP…SEKN). The segment covering 779–792 (DSDNTMSSGRNAAG) has biased composition (polar residues). Ser971 is subject to Phosphoserine. Low complexity predominate over residues 972-981 (PSSSRNPSFS).

This sequence belongs to the TRS120 family. In terms of assembly, part of the multisubunit TRAPP (transport protein particle) II complex composed of BET3, BET5, TRS20, TRS23, TRS31, TRS33, TRS65, TRS85, TRS120 and TRS130. As to expression, expressed in roots, leaves, stems and flowers.

It is found in the golgi apparatus. The protein resides in the trans-Golgi network. The protein localises to the early endosome. Its function is as follows. Specific subunit of the TRAPP II complex, a highly conserved vesicle tethering complex that is required for the proper transport of proteins in post-Golgi trafficking pathways to the growing cell plate in mitotic active cells. Required for the polarized and selective transport of PIN2 and probably PIN1 to the plasma membrane. Not required for ER-to-Golgi as well as biosynthetic and endocytic vacuolar transport. In Arabidopsis thaliana (Mouse-ear cress), this protein is Trafficking protein particle complex II-specific subunit 120 homolog.